Consider the following 585-residue polypeptide: Mitochondrial sodium/calcium exchanger protein (585 aa).

Residues 1–26 (MASRWLALLWAPVFLCVALILETASG) form the signal peptide. Topologically, residues 27 to 95 (TGDPSTKAHG…GIFCYFPPNL (69 aa)) are extracellular. Asn-46 carries N-linked (GlcNAc...) asparagine glycosylation. A helical membrane pass occupies residues 96-116 (LPLAITLYVFWLLYLFLILGV). Topologically, residues 117–140 (TAAKFFCPNLSAISTNLKLSHNVA) are cytoplasmic. A helical transmembrane segment spans residues 141–161 (GVTFLAFGNGAPDIFSALVAF). At 162–168 (SDPRTAG) the chain is on the extracellular side. A helical transmembrane segment spans residues 169 to 189 (LAIGALFGAGVLVTTVVAGGI). Residues 190–205 (TILHPFMAASRPFLRD) lie on the Cytoplasmic side of the membrane. Residues 206-226 (IAFYMVAVFLTFTALYLGRIT) form a helical membrane-spanning segment. The Extracellular segment spans residues 227 to 229 (LTW). Residues 230–250 (ALGYLGLYVFYVVTVIICTWV) traverse the membrane as a helical segment. Over 251 to 325 (YQRQRSRSLV…KWRTQSISWR (75 aa)) the chain is Cytoplasmic. Phosphoserine; by PKA is present on Ser-258. A helical transmembrane segment spans residues 326-346 (VLKVVKLPVEFLLLLTVPVVD). The Extracellular segment spans residues 347–360 (PDKDDRNWKRPLNC). The chain crosses the membrane as a helical span at residues 361 to 381 (LQLVISPLVLVLTLQSGVYGI). At 382–383 (YE) the chain is on the cytoplasmic side. Residues 384–404 (IGGLLPVWAVVVIVGTALASV) traverse the membrane as a helical segment. The Extracellular portion of the chain corresponds to 405–416 (TFFATSNREPPR). A helical membrane pass occupies residues 417–437 (LHWLFAFLGFLTSALWINAAA). At 438–445 (TEVVNILR) the chain is on the cytoplasmic side. The helical transmembrane segment at 446–466 (SLGVIFRLSNTVLGLTLLAWG) threads the bilayer. At 467–491 (NSIGDAFSDFTLARQGYPRMAFSAC) the chain is on the extracellular side. The helical transmembrane segment at 492–512 (FGGIIFNILVGVGLGCLLQII) threads the bilayer. Residues 513 to 525 (RNHVVEVKLEPDG) are Cytoplasmic-facing. The helical transmembrane segment at 526–546 (LLVWVLASALGLSLIFSLVSV) threads the bilayer. The Extracellular portion of the chain corresponds to 547–559 (PLQCFQLSKAYGL). The chain crosses the membrane as a helical span at residues 560–580 (CLLLFYICFLVVVLLTEFGVI). The Cytoplasmic portion of the chain corresponds to 581 to 585 (HLKKA).

The protein belongs to the Ca(2+):cation antiporter (CaCA) (TC 2.A.19) family. SLC24A subfamily. In terms of processing, phosphorylation at Ser-258 by PKA prevents calcium overload. As to expression, ubiquitously expressed. Expressed in dental tissues.

Its subcellular location is the mitochondrion inner membrane. The protein localises to the cell membrane. The catalysed reaction is Ca(2+)(in) + 3 Na(+)(out) = Ca(2+)(out) + 3 Na(+)(in). It catalyses the reaction 3 Li(+)(out) + Ca(2+)(in) = 3 Li(+)(in) + Ca(2+)(out). With respect to regulation, inhibited by the sodium/calcium exchanger inhibitor CGP-37157. Strongly inhibited by zinc. In terms of biological role, mitochondrial sodium/calcium antiporter that mediates sodium-dependent calcium efflux from mitochondrion, by mediating the exchange of 3 sodium ions per 1 calcium ion. Plays a central role in mitochondrial calcium homeostasis by mediating mitochondrial calcium extrusion: calcium efflux is essential for mitochondrial function and cell survival, notably in cardiomyocytes. Regulates rates of glucose-dependent insulin secretion in pancreatic beta-cells during the first phase of insulin secretion: acts by mediating efflux of calcium from mitochondrion, thereby affecting cytoplasmic calcium responses. Required for store-operated Ca(2+) entry (SOCE) and Ca(2+) release-activated Ca(2+) (CRAC) channel regulation: sodium transport by SLC8B1 leads to promote calcium-shuttling that modulates mitochondrial redox status, thereby regulating SOCE activity. Involved in B-lymphocyte chemotaxis. Able to transport Ca(2+) in exchange of either Li(+) or Na(+), explaining how Li(+) catalyzes Ca(2+) exchange. In contrast to other members of the family its function is independent of K(+). The polypeptide is Mitochondrial sodium/calcium exchanger protein (Mus musculus (Mouse)).